Here is a 741-residue protein sequence, read N- to C-terminus: ABC transporter D family member 2 (741 aa).

The next 3 helical transmembrane spans lie at 39–59, 119–139, and 260–280; these read GSLGKKVFILLALGGGAFSLV, FLSLLYLTALLFARTMLSVSI, and VVVMGWGSPLLMFSYFIVSGF. Positions 131 to 409 constitute an ABC transmembrane type-1 domain; sequence ARTMLSVSIA…LMVALSQAIG (279 aa). The ABC transporter domain occupies 518–740; it reads IKFENVSIVS…DDDHLKKPLS (223 aa). An ATP-binding site is contributed by 551 to 558; it reads GPNGSGKS.

This sequence belongs to the ABC transporter superfamily. ABCD family. Peroxisomal fatty acyl CoA transporter (TC 3.A.1.203) subfamily.

It localises to the membrane. The protein is ABC transporter D family member 2 (abcD2) of Dictyostelium discoideum (Social amoeba).